The following is a 224-amino-acid chain: Ribonuclease HII (224 aa).

The RNase H type-2 domain occupies 17–201 (GTVIGVDEAG…VLSNLSVKKV (185 aa)). Asp-23, Glu-24, and Asp-111 together coordinate a divalent metal cation.

It belongs to the RNase HII family. Mn(2+) is required as a cofactor. Mg(2+) serves as cofactor.

Its subcellular location is the cytoplasm. It carries out the reaction Endonucleolytic cleavage to 5'-phosphomonoester.. Its function is as follows. Endonuclease that specifically degrades the RNA of RNA-DNA hybrids. The chain is Ribonuclease HII from Pseudothermotoga lettingae (strain ATCC BAA-301 / DSM 14385 / NBRC 107922 / TMO) (Thermotoga lettingae).